A 136-amino-acid polypeptide reads, in one-letter code: NADPH-dependent 7-cyano-7-deazaguanine reductase (136 aa).

The active-site Thioimide intermediate is the C50. The active-site Proton donor is the D57. Substrate is bound by residues 72–74 (YEL) and 91–92 (HE).

The protein belongs to the GTP cyclohydrolase I family. QueF type 1 subfamily.

Its subcellular location is the cytoplasm. It catalyses the reaction 7-aminomethyl-7-carbaguanine + 2 NADP(+) = 7-cyano-7-deazaguanine + 2 NADPH + 3 H(+). The protein operates within tRNA modification; tRNA-queuosine biosynthesis. Catalyzes the NADPH-dependent reduction of 7-cyano-7-deazaguanine (preQ0) to 7-aminomethyl-7-deazaguanine (preQ1). The protein is NADPH-dependent 7-cyano-7-deazaguanine reductase of Prochlorococcus marinus (strain AS9601).